The chain runs to 104 residues: Putative heat shock protein PS1 (104 aa).

N-linked (GlcNAc...) asparagine glycans are attached at residues asparagine 11 and asparagine 18. Asparagine 18 serves as a coordination point for ATP.

Belongs to the heat shock protein 90 family. Homodimer.

It localises to the cytoplasm. In terms of biological role, putative molecular chaperone that may promote the maturation, structural maintenance and proper regulation of specific target proteins. The chain is Putative heat shock protein PS1 from Pinus strobus (Eastern white pine).